The chain runs to 105 residues: uncharacterized protein (105 aa).

2 disordered regions span residues 29–55 and 72–105; these read HTRVGVTDPDPRVPPLLPGPAGVTDES and EQRGDRRAVRCEPAGEPPLDDVRTPAAPAVRSGR. The segment covering 72 to 81 has biased composition (basic and acidic residues); the sequence is EQRGDRRAVR.

This is an uncharacterized protein from Streptomyces coelicolor (strain ATCC BAA-471 / A3(2) / M145).